The chain runs to 205 residues: Large ribosomal subunit protein uL4 (205 aa).

The interval 56 to 76 is disordered; that stretch reads VSGTTAKPYRQKHTGRARQGS.

This sequence belongs to the universal ribosomal protein uL4 family. As to quaternary structure, part of the 50S ribosomal subunit.

Functionally, one of the primary rRNA binding proteins, this protein initially binds near the 5'-end of the 23S rRNA. It is important during the early stages of 50S assembly. It makes multiple contacts with different domains of the 23S rRNA in the assembled 50S subunit and ribosome. Its function is as follows. Forms part of the polypeptide exit tunnel. This chain is Large ribosomal subunit protein uL4, found in Ehrlichia ruminantium (strain Welgevonden).